The following is a 269-amino-acid chain: Troponin I (269 aa).

A disordered region spans residues 1 to 104 (MADDEKKAAA…AKKGFMTPER (104 aa)). A2 carries the post-translational modification N-acetylalanine. Residues 9–50 (AAPAAAPAAAAKPAAPAAAPAANGKAAPAANGKAAPAAAAAP) are compositionally biased toward low complexity. The span at 56 to 91 (DPNDPKVKAEEAKKAKQAEIERKRAEVRKRMEEASK) shows a compositional bias: basic and acidic residues. Positions 162-171 (ERMYICEGQK) are troponin T-interaction. Residues 189-202 (NAQVNDLRGKFVKP) form an actin-binding region. 2 positions are modified to N6,N6,N6-trimethyllysine: K201 and K205. A disordered region spans residues 239–269 (TLEEEEKEKKPDWSKGKPGDAKVKEEVEAEA).

Belongs to the troponin I family. Binds to actin and tropomyosin. As to expression, all isoforms are expressed in somatic muscle. Isoforms containing exon 6a1 (isoforms 1 and 2) are expressed in all muscles but highest expression is in abdominal muscle and splanchnic muscle of the gut. Isoforms containing exon 6b1 (isoforms 5, 6, 9 and 10) are highly expressed in the tergal depressor of trochanter (TDT) muscle.

Its function is as follows. Troponin I is the ATPase inhibitory subunit of troponin in the thin filament regulatory complex. Involved in the development and maintenance of muscle and nervous system. May also be involved in the cytoskeletal apparatus. In Drosophila melanogaster (Fruit fly), this protein is Troponin I (wupA).